The sequence spans 122 residues: MIQMESLLKAADNSGARQVQCIKVLGGSKRRYAGIGDIVKVSVKDAIPRGRVKKGEVYNAVVVRSKRGVRRADGSQIRFDGNAAVLLNNNLQPIGTRVFGPVTRELRNERFMRIISLAPEVL.

It belongs to the universal ribosomal protein uL14 family. Part of the 50S ribosomal subunit. Forms a cluster with proteins L3 and L19. In the 70S ribosome, L14 and L19 interact and together make contacts with the 16S rRNA in bridges B5 and B8.

In terms of biological role, binds to 23S rRNA. Forms part of two intersubunit bridges in the 70S ribosome. This is Large ribosomal subunit protein uL14 from Halorhodospira halophila (strain DSM 244 / SL1) (Ectothiorhodospira halophila (strain DSM 244 / SL1)).